The chain runs to 371 residues: MLKFTLHKKDGYARRGTLELNHGKIETPVFMPVGTYGSVKAMNPQNLHDIKAQIILGNTYHLWLRPGLEVVEQFGGLHGFIGWDKPILTDSGGFQVFSLSDMRKLTEEGCTFKSPINGDKLFLSPEISMKIQTVLNSDIAMQLDECTPGEATREQARKSLQMSLRWAERSKKAFEDLKNPNALFGIVQGAMYEDLREESLKGLEELDFPGLAIGGLSVGEPKPEMYRMLRAVGPILPEHKPHYLMGVGTPEDLVYGVAHGVDMFDCVMPTRNARNGWLFTRFGDLKIKNAKHKLDKRPIDESCTCYACQNFSRAYLHHLHRAGEILGAQLNTIHNLHFYQVIMAEMREAVEQGKFADWQAQFHENRARGTD.

Asp90 (proton acceptor) is an active-site residue. Residues 90–94 (DSGGF), Asp144, Gln188, and Gly215 each bind substrate. The RNA binding stretch occupies residues 246–252 (GVGTPED). Asp265 (nucleophile) is an active-site residue. Residues 270-274 (TRNAR) are RNA binding; important for wobble base 34 recognition. Zn(2+) is bound by residues Cys303, Cys305, Cys308, and His334.

It belongs to the queuine tRNA-ribosyltransferase family. In terms of assembly, homodimer. Within each dimer, one monomer is responsible for RNA recognition and catalysis, while the other monomer binds to the replacement base PreQ1. The cofactor is Zn(2+).

It catalyses the reaction 7-aminomethyl-7-carbaguanine + guanosine(34) in tRNA = 7-aminomethyl-7-carbaguanosine(34) in tRNA + guanine. It participates in tRNA modification; tRNA-queuosine biosynthesis. Catalyzes the base-exchange of a guanine (G) residue with the queuine precursor 7-aminomethyl-7-deazaguanine (PreQ1) at position 34 (anticodon wobble position) in tRNAs with GU(N) anticodons (tRNA-Asp, -Asn, -His and -Tyr). Catalysis occurs through a double-displacement mechanism. The nucleophile active site attacks the C1' of nucleotide 34 to detach the guanine base from the RNA, forming a covalent enzyme-RNA intermediate. The proton acceptor active site deprotonates the incoming PreQ1, allowing a nucleophilic attack on the C1' of the ribose to form the product. After dissociation, two additional enzymatic reactions on the tRNA convert PreQ1 to queuine (Q), resulting in the hypermodified nucleoside queuosine (7-(((4,5-cis-dihydroxy-2-cyclopenten-1-yl)amino)methyl)-7-deazaguanosine). The polypeptide is Queuine tRNA-ribosyltransferase (Neisseria meningitidis serogroup A / serotype 4A (strain DSM 15465 / Z2491)).